Consider the following 124-residue polypeptide: Large ribosomal subunit protein bL12 (124 aa).

Belongs to the bacterial ribosomal protein bL12 family. Homodimer. Part of the ribosomal stalk of the 50S ribosomal subunit. Forms a multimeric L10(L12)X complex, where L10 forms an elongated spine to which 2 to 4 L12 dimers bind in a sequential fashion. Binds GTP-bound translation factors.

In terms of biological role, forms part of the ribosomal stalk which helps the ribosome interact with GTP-bound translation factors. Is thus essential for accurate translation. This Idiomarina loihiensis (strain ATCC BAA-735 / DSM 15497 / L2-TR) protein is Large ribosomal subunit protein bL12.